Here is a 294-residue protein sequence, read N- to C-terminus: Non-selective voltage-gated ion channel VDAC2 (294 aa).

An N-acetylalanine modification is found at Ala2. Positions 23 and 31 each coordinate ATP. N6-acetyllysine; alternate is present on Lys31. Lys31 bears the N6-succinyllysine; alternate mark. Residue Lys31 forms a Glycyl lysine isopeptide (Lys-Gly) (interchain with G-Cter in ubiquitin); alternate linkage. Transmembrane regions (beta stranded) follow at residues 37–46 (LVKLDVKTKS) and 50–58 (VEFSTSGSS). Glycyl lysine isopeptide (Lys-Gly) (interchain with G-Cter in ubiquitin) cross-links involve residues Lys64 and Lys72. Residues 65–75 (VTGTLETKYKW) form a beta stranded membrane-spanning segment. Tyr78 is subject to Phosphotyrosine. 3 beta stranded membrane-spanning segments follow: residues 80–87 (LTFTEKWN), 91–100 (TLGTEIAIED), and 106–115 (LKLTFDTTFS). Residue Thr118 is modified to Phosphothreonine. Lys120 is subject to N6-acetyllysine; alternate. Lys120 is covalently cross-linked (Glycyl lysine isopeptide (Lys-Gly) (interchain with G-Cter in ubiquitin); alternate). Glycyl lysine isopeptide (Lys-Gly) (interchain with G-Cter in ubiquitin) cross-links involve residues Lys121 and Lys124. 4 consecutive transmembrane segments (beta stranded) span residues 122–131 (SGKIKSSYKR), 134–141 (INLGCDVD), 148–156 (AIHGSAVFG), and 161–169 (LAGYQMTFD). A Glycyl lysine isopeptide (Lys-Gly) (interchain with G-Cter in ubiquitin) cross-link involves residue Lys172. Beta stranded transmembrane passes span 174-186 (KLTR…GYRT), 189-196 (FQLHTNVN), 200-209 (EFGGSIYQKV), 213-222 (LDTSVNLAWT), 229-238 (RFGIAAKYQL), and 242-249 (ASISAKVN). Ser251 is subject to Phosphoserine. NAD(+) contacts are provided by residues 253–255 (LIG) and 271–275 (SALVD). 2 beta stranded membrane passes run 253–262 (LIGVGYTQTL) and 265–274 (GVKLTLSALV). N6-acetyllysine; alternate is present on Lys277. Lys277 participates in a covalent cross-link: Glycyl lysine isopeptide (Lys-Gly) (interchain with G-Cter in ubiquitin); alternate. A beta stranded membrane pass occupies residues 284–293 (HKVGLALELE). Lys285 participates in a covalent cross-link: Glycyl lysine isopeptide (Lys-Gly) (interchain with G-Cter in ubiquitin).

The protein belongs to the eukaryotic mitochondrial porin family. As to quaternary structure, monomer, homodimer and higher order oligomers; formation of higher order structures is necessary for scramblase activity. Interacts with ARMC12 in a TBC1D21-dependent manner. Interacts with KLC3. Interacts with SPATA33. Interacts with PPP3CC in a SPATA33-dependent manner. Post-translationally, ubiquitinated by PRKN during mitophagy, leading to its degradation and enhancement of mitophagy. Deubiquitinated by USP30. In terms of tissue distribution, expressed in erythrocytes (at protein level). Expressed in all tissues examined.

Its subcellular location is the mitochondrion outer membrane. The protein resides in the membrane. The enzyme catalyses chloride(in) = chloride(out). The catalysed reaction is K(+)(in) = K(+)(out). It carries out the reaction a 1,2-diacyl-sn-glycero-3-phospho-L-serine(in) = a 1,2-diacyl-sn-glycero-3-phospho-L-serine(out). It catalyses the reaction a 1,2-diacyl-sn-glycero-3-phosphocholine(in) = a 1,2-diacyl-sn-glycero-3-phosphocholine(out). The enzyme catalyses a 1,2-diacyl-sn-glycero-3-phospho-(1D-myo-inositol)(in) = a 1,2-diacyl-sn-glycero-3-phospho-(1D-myo-inositol)(out). Non-selective voltage-gated ion channel that mediates the transport of anions and cations through the mitochondrion outer membrane and plasma membrane. The channel adopts an open conformation at zero mV and a closed conformation at both positive and negative potentials. There are two populations of channels; the main that functions in a lower open-state conductance with lower ion selectivity, that switch, in a voltage-dependent manner, from the open to a low-conducting 'closed' state and the other that has a normal ion selectivity in the typical high conductance, 'open' state. Binds various lipids, including the sphingolipid ceramide, the phospholipid phosphatidylcholine, and the sterols cholesterol and oxysterol. Binding of ceramide promotes the mitochondrial outer membrane permeabilization (MOMP) apoptotic pathway. In terms of biological role, catalyzes the scrambling of phospholipids across the outer mitochondrial membrane; the mechanism is unrelated to channel activity and is capable of translocating both anionic and zwitterionic phospholipids. The protein is Non-selective voltage-gated ion channel VDAC2 of Homo sapiens (Human).